Reading from the N-terminus, the 514-residue chain is Bifunctional purine biosynthesis protein PurH (514 aa).

One can recognise an MGS-like domain in the interval 1-145 (MIKRALISVS…KNYQDVAVIV (145 aa)).

This sequence belongs to the PurH family.

It carries out the reaction (6R)-10-formyltetrahydrofolate + 5-amino-1-(5-phospho-beta-D-ribosyl)imidazole-4-carboxamide = 5-formamido-1-(5-phospho-D-ribosyl)imidazole-4-carboxamide + (6S)-5,6,7,8-tetrahydrofolate. The enzyme catalyses IMP + H2O = 5-formamido-1-(5-phospho-D-ribosyl)imidazole-4-carboxamide. It functions in the pathway purine metabolism; IMP biosynthesis via de novo pathway; 5-formamido-1-(5-phospho-D-ribosyl)imidazole-4-carboxamide from 5-amino-1-(5-phospho-D-ribosyl)imidazole-4-carboxamide (10-formyl THF route): step 1/1. It participates in purine metabolism; IMP biosynthesis via de novo pathway; IMP from 5-formamido-1-(5-phospho-D-ribosyl)imidazole-4-carboxamide: step 1/1. The protein is Bifunctional purine biosynthesis protein PurH of Ruminiclostridium cellulolyticum (strain ATCC 35319 / DSM 5812 / JCM 6584 / H10) (Clostridium cellulolyticum).